Here is an 86-residue protein sequence, read N- to C-terminus: Neuropeptide-like 2 (86 aa).

The N-terminal stretch at 1-19 (MAKLAICILVFALFALALS) is a signal peptide. 2 consecutive propeptides follow at residues 20-34 (ARVP…QEFL) and 45-86 (IEKL…AAST).

As to expression, hemolymph (at protein level).

Its subcellular location is the secreted. This chain is Neuropeptide-like 2 (Nplp2), found in Drosophila melanogaster (Fruit fly).